The following is a 280-amino-acid chain: Nuclear egress protein 1 (280 aa).

A CCCH-type zinc finger spans residues 86–203 (CLTLSPYGHS…YIIFTSLTLH (118 aa)).

Belongs to the herpesviridae NEC1 protein family. In terms of assembly, forms a heterohexameric complex with NEC2. Interacts with capsid vertex specific component 2/CVC2; this interaction directs the capsid to the host inner nuclear membrane to initiate budding. Post-translationally, phosphorylated at serine residues in the N-terminus. This phosphorylation regulates the localization within the inner nuclear membrane.

Its subcellular location is the host nucleus inner membrane. Functionally, plays an essential role in virion nuclear egress, the first step of virion release from infected cell. Within the host nucleus, NEC1 interacts with the newly formed capsid through the vertexes and directs it to the inner nuclear membrane by associating with NEC2. Induces the budding of the capsid at the inner nuclear membrane as well as its envelopment into the perinuclear space. There, the NEC1/NEC2 complex promotes the fusion of the enveloped capsid with the outer nuclear membrane and the subsequent release of the viral capsid into the cytoplasm where it will reach the secondary budding sites in the host Golgi or trans-Golgi network. The sequence is that of Nuclear egress protein 1 from Alcelaphine herpesvirus 1 (strain C500) (AlHV-1).